The following is an 82-amino-acid chain: RNA-binding protein Hfq (82 aa).

Residues 11-71 (DTFLNSVRKS…ISTIMPAQPV (61 aa)) enclose the Sm domain.

The protein belongs to the Hfq family. In terms of assembly, homohexamer.

RNA chaperone that binds small regulatory RNA (sRNAs) and mRNAs to facilitate mRNA translational regulation in response to envelope stress, environmental stress and changes in metabolite concentrations. Also binds with high specificity to tRNAs. The protein is RNA-binding protein Hfq of Caulobacter sp. (strain K31).